The following is a 465-amino-acid chain: Beta-1,2-xylosyltransferase XYXT1 (465 aa).

The Cytoplasmic segment spans residues 1-11; sequence MKAAVRSKKSK. A helical; Signal-anchor for type II membrane protein membrane pass occupies residues 12-32; it reads GSFCHPPLLLLIVAIQFLVIY. Residues 33 to 465 lie on the Lumenal side of the membrane; it reads SPTLDQYMVM…VLLKALHLLR (433 aa). N-linked (GlcNAc...) asparagine glycans are attached at residues asparagine 80, asparagine 118, asparagine 125, asparagine 266, and asparagine 403.

This sequence belongs to the glycosyltransferase 61 family. In terms of tissue distribution, widely expressed.

It localises to the golgi apparatus membrane. It participates in glycan metabolism. Glycosyltransferase involved in the xylosylation of xylan, the major hemicellulose (non-cellulosic component) of primary and secondary walls of angiosperms. Possesses beta-1,2-xylosyltransferase activity, transferring xylose from UDP-xylose to the xylan backbone. Catalyzes the addition of 2-O-xylosyl side chains to the xylan backbone. The chain is Beta-1,2-xylosyltransferase XYXT1 from Oryza sativa subsp. japonica (Rice).